The chain runs to 283 residues: Peroxisome biogenesis protein 22 (283 aa).

Position 2 is an N-acetylalanine (Ala2). The helical transmembrane segment at 45-62 (IGAIAGLAIAVIFTWRAI) threads the bilayer. The tract at residues 66–107 (GEQRQRRQPKRRIHNAETSSAAAAASQSNLASSVAPEVSSPR) is disordered. Residues 81 to 100 (AETSSAAAAASQSNLASSVA) are compositionally biased toward low complexity.

Belongs to the peroxin-22 family. As to quaternary structure, interacts with PEX4.

It localises to the peroxisome membrane. Functionally, may be tethered PEX4 to the peroxisome membrane and may be involved in a late step of the matrix protein import. Does not play a role in the biogenesis of the peroxisomal membrane. The protein is Peroxisome biogenesis protein 22 (PEX22) of Arabidopsis thaliana (Mouse-ear cress).